We begin with the raw amino-acid sequence, 337 residues long: G-protein coupled receptor 26 (337 aa).

Residues 1–10 (MNSWDAGLAG) lie on the Extracellular side of the membrane. Residues 11-31 (LLVGTMGVSLLSNALVLLCLL) traverse the membrane as a helical segment. Residues 32 to 47 (HSADIRRQAPALFTLN) lie on the Cytoplasmic side of the membrane. The helical transmembrane segment at 48 to 68 (LTCGNLLCTVVNMPLTLAGVV) threads the bilayer. Over 69-81 (AQRQPAGDRLCRL) the chain is Extracellular. A disulfide bond links C79 and C156. The helical transmembrane segment at 82-102 (AAFLDTFLAANSMLSMAALSI) threads the bilayer. The Cytoplasmic segment spans residues 103–123 (DRWVAVVFPLSYRAKMRLRDA). A helical transmembrane segment spans residues 124 to 144 (ALMVAYTWLHALTFPAAALAL). At 145 to 168 (SWLGFHQLYASCTLCSRRPDERLR) the chain is on the extracellular side. Residues 169-189 (FAVFTGAFHALSFLLSFVVLC) traverse the membrane as a helical segment. Topologically, residues 190–245 (CTYLKVLKVARFHCKRIDVITMQTLVLLVDLHPSVRERCLEEQKRRRQRATKKIST) are cytoplasmic. A helical membrane pass occupies residues 246–266 (FIGTFLVCFAPYVITRLVELF). Topologically, residues 267–276 (STVPIGSHWG) are extracellular. The helical transmembrane segment at 277 to 297 (VLSKCLAYSKAASDPFVYSLL) threads the bilayer. At 298–337 (RHQYRKSCKEILNRLLHRRSIHSSGLTGDSHSQNILPVSE) the chain is on the cytoplasmic side.

It belongs to the G-protein coupled receptor 1 family. As to expression, highly expressed in the CNS, the highest expression is seen in the amygdala, hippocampus and thalamus. Weak expression is detected in testis. Down-regulated in glioblastoma.

Its subcellular location is the cell membrane. Its function is as follows. Orphan receptor. Displays a significant level of constitutive activity. Its effect is mediated by G(s)-alpha protein that stimulate adenylate cyclase, resulting in an elevation of intracellular cAMP. The protein is G-protein coupled receptor 26 (GPR26) of Homo sapiens (Human).